A 307-amino-acid chain; its full sequence is Type 2A encapsulin shell protein (307 aa).

The protein belongs to the encapsulin family. Family 2A subfamily. Homooligomeric. The encapsulin nanocompartment is formed by 60 subunits; monomers form pentamers which assemble to form shells. There are 12 charged pores where the pentamers meet as well as 3-fold axis channels and dimer channels. Post-translationally, the N-terminus is blocked.

The protein resides in the encapsulin nanocompartment. It localises to the cytoplasm. The protein localises to the cytosol. Its subcellular location is the cell membrane. Functionally, shell component of a type 2A encapsulin nanocompartment. Forms encapsulin nanocompartments about 24 nm in diameter from 60 monomers. Probably encapsulates at least cysteine desulfurase (CyD, AC O32975) and allows passage of cysteine into its interior, probably involved in sulfur metabolism. Expression in M.smegmatis generates a multimeric protein, whereas expression in E.coli does not. This is Type 2A encapsulin shell protein from Mycobacterium leprae (strain TN).